Here is a 535-residue protein sequence, read N- to C-terminus: Suppressor of cytokine signaling 6 (535 aa).

The span at 80–89 (RLSAKQKSKG) shows a compositional bias: basic residues. The disordered stretch occupies residues 80 to 105 (RLSAKQKSKGKAGTPSGSSADEDTFS). The SH2 domain occupies 384–491 (WYWGPITRWE…TYPVRLTNPV (108 aa)). One can recognise an SOCS box domain in the interval 486 to 535 (RLTNPVSRFMQVRSLQYLCRFVIRQYTRIDLIQKLPLPNKMKDYLQEKHY).

As to quaternary structure, interacts with RBCK1. Interacts with phosphorylated IRS4. Interacts with PIM3. Interacts with KIT (phosphorylated).

It functions in the pathway protein modification; protein ubiquitination. Its function is as follows. SOCS family proteins form part of a classical negative feedback system that regulates cytokine signal transduction. May be a substrate recognition component of a SCF-like ECS (Elongin BC-CUL2/5-SOCS-box protein) E3 ubiquitin-protein ligase complex which mediates the ubiquitination and subsequent proteasomal degradation of target proteins. Regulates KIT degradation by ubiquitination of the tyrosine-phosphorylated receptor. The chain is Suppressor of cytokine signaling 6 (SOCS6) from Homo sapiens (Human).